The sequence spans 78 residues: Exodeoxyribonuclease 7 small subunit (78 aa).

The protein belongs to the XseB family. In terms of assembly, heterooligomer composed of large and small subunits.

The protein localises to the cytoplasm. It catalyses the reaction Exonucleolytic cleavage in either 5'- to 3'- or 3'- to 5'-direction to yield nucleoside 5'-phosphates.. Its function is as follows. Bidirectionally degrades single-stranded DNA into large acid-insoluble oligonucleotides, which are then degraded further into small acid-soluble oligonucleotides. This is Exodeoxyribonuclease 7 small subunit from Nocardia farcinica (strain IFM 10152).